Here is a 665-residue protein sequence, read N- to C-terminus: Cysteine-rich receptor-like protein kinase 41 (665 aa).

A signal peptide spans 1-27 (MTSSCSLSRPQHLFFFFFLFVPFLSLG). Residues 28–280 (QQISVDINSA…DPKPGNDKVK (253 aa)) are Extracellular-facing. Gnk2-homologous domains are found at residues 42–148 (PSNP…DKPI) and 154–260 (TSPV…SDLR). N-linked (GlcNAc...) asparagine glycans are attached at residues asparagine 120, asparagine 165, and asparagine 236. A helical membrane pass occupies residues 281-301 (IIIATVCSVIGFAIIAVFLYF). Residues 302–665 (FMTRNRRTAK…DVTITEFDAR (364 aa)) are Cytoplasmic-facing. The Protein kinase domain occupies 344 to 624 (FSRDNQLGEG…VVMLNANSFT (281 aa)). Residues 350-358 (LGEGGFGAV) and lysine 372 each bind ATP. Tyrosine 417 carries the phosphotyrosine modification. Residue aspartate 469 is the Proton acceptor of the active site. At serine 473 the chain carries Phosphoserine. Phosphothreonine is present on threonine 511. Position 519 is a phosphotyrosine (tyrosine 519).

This sequence belongs to the protein kinase superfamily. Ser/Thr protein kinase family. CRK subfamily.

The protein resides in the membrane. The enzyme catalyses L-seryl-[protein] + ATP = O-phospho-L-seryl-[protein] + ADP + H(+). It carries out the reaction L-threonyl-[protein] + ATP = O-phospho-L-threonyl-[protein] + ADP + H(+). The polypeptide is Cysteine-rich receptor-like protein kinase 41 (CRK41) (Arabidopsis thaliana (Mouse-ear cress)).